Here is an 811-residue protein sequence, read N- to C-terminus: Probable inorganic carbon transporter subunit DabA (811 aa).

4 residues coordinate Zn(2+): C336, D338, H498, and C513.

Belongs to the inorganic carbon transporter (TC 9.A.2) DabA family. As to quaternary structure, forms a complex with DabB. Requires Zn(2+) as cofactor.

Its subcellular location is the cell inner membrane. Functionally, part of an energy-coupled inorganic carbon pump. This chain is Probable inorganic carbon transporter subunit DabA, found in Azorhizobium caulinodans (strain ATCC 43989 / DSM 5975 / JCM 20966 / LMG 6465 / NBRC 14845 / NCIMB 13405 / ORS 571).